The primary structure comprises 322 residues: MKTTFLEFEQPIAELEAKIEELRFVQDDSAVDISEEISRLAAKSQQLTKDLYATLSPWQVAQIARHPQRPYTLDYVREIFTDFHELHGDRTFADDLSIVGGLARFNGQPCMVIGHQKGRDTKERALRNFGMSKPEGYRKAKRLMELADKFGLPIFTFVDTPGAFPGIEAEERGQSEAIGHNLFVMAGLKVPLIATIIGEGGSGGALAIAVGDSVIMLQFATYAVISPEGCASILWKTAEKAPEAAEALGLTAHRLKALGLIDKIVNEPLGGAHRDPKAMATMLKRALAESLRQFQGMKTSELQARRHERLMAYGKFKETGSN.

A CoA carboxyltransferase C-terminal domain is found at 39–293 (RLAAKSQQLT…KRALAESLRQ (255 aa)).

This sequence belongs to the AccA family. Acetyl-CoA carboxylase is a heterohexamer composed of biotin carboxyl carrier protein (AccB), biotin carboxylase (AccC) and two subunits each of ACCase subunit alpha (AccA) and ACCase subunit beta (AccD).

It localises to the cytoplasm. The catalysed reaction is N(6)-carboxybiotinyl-L-lysyl-[protein] + acetyl-CoA = N(6)-biotinyl-L-lysyl-[protein] + malonyl-CoA. It functions in the pathway lipid metabolism; malonyl-CoA biosynthesis; malonyl-CoA from acetyl-CoA: step 1/1. Its function is as follows. Component of the acetyl coenzyme A carboxylase (ACC) complex. First, biotin carboxylase catalyzes the carboxylation of biotin on its carrier protein (BCCP) and then the CO(2) group is transferred by the carboxyltransferase to acetyl-CoA to form malonyl-CoA. In Ralstonia nicotianae (strain ATCC BAA-1114 / GMI1000) (Ralstonia solanacearum), this protein is Acetyl-coenzyme A carboxylase carboxyl transferase subunit alpha.